Here is a 246-residue protein sequence, read N- to C-terminus: Transcription factor A, mitochondrial (246 aa).

A mitochondrion-targeting transit peptide spans 1–42 (MALLRGVWGVLSALGKSGADLCAVCGSRLRSPFSFAYVPRWF). Positions 50–118 (PKKPMTSYVR…VYKEEVNRIQ (69 aa)) form a DNA-binding region, HMG box 1. S56 and S61 each carry phosphoserine; by PKA. Position 122 is a phosphothreonine (T122). Residues 155–219 (PKRPRSAYNI…RYYNEMKSWE (65 aa)) constitute a DNA-binding region (HMG box 2). S160 carries the post-translational modification Phosphoserine; by PKA. Residues S193 and S195 each carry the phosphoserine modification.

Monomer; binds DNA as a monomer. Homodimer. Component of the mitochondrial transcription initiation complex, composed at least of TFB2M, TFAM and POLRMT. In this complex TFAM recruits POLRMT to the promoter whereas TFB2M induces structural changes in POLRMT to enable promoter opening and trapping of the DNA non-template strand. Upon metabolic stress, forms a complex composed of FOXO3, SIRT3, TFAM and POLRMT. Interacts with TFB1M and TFB2M. Interacts with CLPX; this enhances DNA-binding. In terms of processing, phosphorylation by PKA within the HMG box 1 impairs DNA binding and promotes degradation by the AAA+ Lon protease.

The protein localises to the mitochondrion. It localises to the mitochondrion matrix. The protein resides in the mitochondrion nucleoid. Functionally, binds to the mitochondrial light strand promoter and functions in mitochondrial transcription regulation. Component of the mitochondrial transcription initiation complex, composed at least of TFB2M, TFAM and POLRMT that is required for basal transcription of mitochondrial DNA. In this complex, TFAM recruits POLRMT to a specific promoter whereas TFB2M induces structural changes in POLRMT to enable promoter opening and trapping of the DNA non-template strand. Required for accurate and efficient promoter recognition by the mitochondrial RNA polymerase. Promotes transcription initiation from the HSP1 and the light strand promoter by binding immediately upstream of transcriptional start sites. Is able to unwind DNA. Bends the mitochondrial light strand promoter DNA into a U-turn shape via its HMG boxes. Required for maintenance of normal levels of mitochondrial DNA. May play a role in organizing and compacting mitochondrial DNA. This Sus scrofa (Pig) protein is Transcription factor A, mitochondrial.